The primary structure comprises 59 residues: Antitoxin Rv0909 (59 aa).

Antitoxin component of a type II toxin-antitoxin (TA) system. Upon expression in M.smegmatis neutralizes the effect of cognate toxin Rv0910. This Mycobacterium tuberculosis (strain ATCC 25618 / H37Rv) protein is Antitoxin Rv0909.